The primary structure comprises 217 residues: Large ribosomal subunit protein uL3 (217 aa).

A disordered region spans residues 127-162; sequence GFSRGPMSHGSKNHRAPGSTGAGTTPGRIYPGKRMA. Over residues 142-153 the composition is skewed to low complexity; that stretch reads APGSTGAGTTPG.

Belongs to the universal ribosomal protein uL3 family. As to quaternary structure, part of the 50S ribosomal subunit. Forms a cluster with proteins L14 and L19.

One of the primary rRNA binding proteins, it binds directly near the 3'-end of the 23S rRNA, where it nucleates assembly of the 50S subunit. The polypeptide is Large ribosomal subunit protein uL3 (Prochlorococcus marinus (strain MIT 9312)).